The following is a 118-amino-acid chain: MNQIDAIEMAQMKKNIPKFIPGDTIKVQVKIVEGDKSRIQAFQGVCLGRQNGGIRESFTVRKISNGVGVERVFPLHSPSIEAIEVVTRGQVRRAKLYYLRKLRGKASRIKERKYVAGQ.

It belongs to the bacterial ribosomal protein bL19 family.

In terms of biological role, this protein is located at the 30S-50S ribosomal subunit interface and may play a role in the structure and function of the aminoacyl-tRNA binding site. The chain is Large ribosomal subunit protein bL19 from Citrifermentans bemidjiense (strain ATCC BAA-1014 / DSM 16622 / JCM 12645 / Bem) (Geobacter bemidjiensis).